We begin with the raw amino-acid sequence, 238 residues long: Uridylate kinase (238 aa).

10-13 lines the ATP pocket; sequence KFSG. The segment at 18–23 is involved in allosteric activation by GTP; it reads GDSGFG. Glycine 52 serves as a coordination point for UMP. Positions 53 and 57 each coordinate ATP. UMP contacts are provided by residues aspartate 73 and 134 to 141; that span reads TGNPFFTT. Residues threonine 161, tyrosine 167, and aspartate 170 each contribute to the ATP site.

The protein belongs to the UMP kinase family. Homohexamer.

It localises to the cytoplasm. The catalysed reaction is UMP + ATP = UDP + ADP. It functions in the pathway pyrimidine metabolism; CTP biosynthesis via de novo pathway; UDP from UMP (UMPK route): step 1/1. Its activity is regulated as follows. Allosterically activated by GTP. Inhibited by UTP. Its function is as follows. Catalyzes the reversible phosphorylation of UMP to UDP. This is Uridylate kinase from Campylobacter curvus (strain 525.92).